A 134-amino-acid polypeptide reads, in one-letter code: Cytochrome c-type biogenesis protein CcmE (134 aa).

The Cytoplasmic portion of the chain corresponds to 1–7 (MKRKYRR). Residues 8–28 (LFVVIITLSIFAGSVVFVLGK) form a helical; Signal-anchor for type II membrane protein membrane-spanning segment. The Periplasmic portion of the chain corresponds to 29 to 134 (LKNNVSFFYT…MPNKYKTNNL (106 aa)). Heme-binding residues include histidine 120 and tyrosine 124.

The protein belongs to the CcmE/CycJ family.

It localises to the cell inner membrane. Its function is as follows. Heme chaperone required for the biogenesis of c-type cytochromes. Transiently binds heme delivered by CcmC and transfers the heme to apo-cytochromes in a process facilitated by CcmF and CcmH. This Ehrlichia ruminantium (strain Gardel) protein is Cytochrome c-type biogenesis protein CcmE.